Reading from the N-terminus, the 295-residue chain is Universal stress protein Mb2028c (295 aa).

ATP is bound by residues Gly-13, Gly-117–Ala-123, Ser-131–Val-132, Gly-165, Asp-198, Gly-262–Gly-268, and Ser-276–Ser-278.

It belongs to the universal stress protein A family.

The sequence is that of Universal stress protein Mb2028c from Mycobacterium bovis (strain ATCC BAA-935 / AF2122/97).